The primary structure comprises 182 residues: uncharacterized protein (182 aa).

It to H.pylori HP0274.

This is an uncharacterized protein from Methanocaldococcus jannaschii (strain ATCC 43067 / DSM 2661 / JAL-1 / JCM 10045 / NBRC 100440) (Methanococcus jannaschii).